A 146-amino-acid chain; its full sequence is MADQYHGVMQKIHDHTPNPTQILGFITLFVSGAILLLLTGLTLTGTVIGLVVLTPVLIFFSPILIPVATVLFVAVAGFLSAGGFGLAALSAISWLYNYIKGRHPPGADQIDYARMRIADTASHVKDYAREYGGYLQSKIQDAAPGA.

An N-acetylalanine modification is found at Ala-2. The next 3 helical transmembrane spans lie at 22–42 (ILGF…TGLT), 56–76 (VLIF…VAVA), and 77–97 (GFLS…WLYN). A Proline-knot motif is present at residues 55 to 66 (PVLIFFSPILIP).

It belongs to the oleosin family. In terms of tissue distribution, expressed in pollen (at protein level).

It is found in the lipid droplet. The protein localises to the membrane. The chain is Oleosin from Pinus elliottii (Slash pine).